Consider the following 280-residue polypeptide: 4-diphosphocytidyl-2-C-methyl-D-erythritol kinase (280 aa).

Lysine 11 is a catalytic residue. 95–105 serves as a coordination point for ATP; it reads PVGAGLGGGSS. The active site involves aspartate 137.

The protein belongs to the GHMP kinase family. IspE subfamily.

It catalyses the reaction 4-CDP-2-C-methyl-D-erythritol + ATP = 4-CDP-2-C-methyl-D-erythritol 2-phosphate + ADP + H(+). The protein operates within isoprenoid biosynthesis; isopentenyl diphosphate biosynthesis via DXP pathway; isopentenyl diphosphate from 1-deoxy-D-xylulose 5-phosphate: step 3/6. Functionally, catalyzes the phosphorylation of the position 2 hydroxy group of 4-diphosphocytidyl-2C-methyl-D-erythritol. This chain is 4-diphosphocytidyl-2-C-methyl-D-erythritol kinase, found in Geobacter sp. (strain M21).